Consider the following 193-residue polypeptide: Phosphoheptose isomerase (193 aa).

The SIS domain occupies 37–193; the sequence is LADSFKVGGK…QLIEKEMVKA (157 aa). 52 to 54 is a binding site for substrate; it reads NGG. Zn(2+)-binding residues include histidine 61 and glutamate 65. Residues glutamate 65, 93-94, 119-121, serine 124, and glutamine 172 contribute to the substrate site; these read ND and STS. Zn(2+) is bound by residues glutamine 172 and histidine 180.

Belongs to the SIS family. GmhA subfamily. Homotetramer. Requires Zn(2+) as cofactor.

The protein resides in the cytoplasm. The catalysed reaction is 2 D-sedoheptulose 7-phosphate = D-glycero-alpha-D-manno-heptose 7-phosphate + D-glycero-beta-D-manno-heptose 7-phosphate. The protein operates within carbohydrate biosynthesis; D-glycero-D-manno-heptose 7-phosphate biosynthesis; D-glycero-alpha-D-manno-heptose 7-phosphate and D-glycero-beta-D-manno-heptose 7-phosphate from sedoheptulose 7-phosphate: step 1/1. It participates in bacterial outer membrane biogenesis; LPS core biosynthesis. Its function is as follows. Catalyzes the isomerization of sedoheptulose 7-phosphate in D-glycero-D-manno-heptose 7-phosphate. The sequence is that of Phosphoheptose isomerase from Photorhabdus laumondii subsp. laumondii (strain DSM 15139 / CIP 105565 / TT01) (Photorhabdus luminescens subsp. laumondii).